The primary structure comprises 742 residues: Two pore calcium channel protein 1 (742 aa).

The disordered stretch occupies residues 1 to 37 (MSEAEAPLITEEAAERGLASSGSRRLSDGAGGQGSRK). The Cytoplasmic portion of the chain corresponds to 1-82 (MSEAEAPLIT…NDTRFGRAMS (82 aa)). The chain crosses the membrane as a helical span at residues 83-103 (FYFVYLRLDWLWSLNLFALIL). At 104-140 (LNFLEKPLWCRKDALQAYDQRDLYFLGQLPYFSKTES) the chain is on the extracellular side. Residues 141-161 (LIYEGLTLVILVMDIFCPLSY) traverse the membrane as a helical segment. At 162 to 176 (EGLNIFWRSTTNKLK) the chain is on the cytoplasmic side. A helical transmembrane segment spans residues 177–197 (IVLLFILACDILVFAFSSQPF). Residues 198-204 (RLAPYIR) lie on the Extracellular side of the membrane. A helical; Voltage-sensor membrane pass occupies residues 205–226 (VVFLIMTIRELRMCAITLAGLI). A helical transmembrane segment spans residues 227–247 (GTYLNVLALSLLFLLFASWLA). Residues 248–258 (YVTFEDTPQGK) lie on the Extracellular side of the membrane. The pore-forming intramembrane region spans 259–273 (TIFSSYGVTLYQMFV). Over 274–296 (LFTTSNNPDVWVHAYKIPRWYSL) the chain is Extracellular. Residues 297 to 317 (FFIVYVLLGVYFLTNLILAVI) traverse the membrane as a helical segment. The Cytoplasmic portion of the chain corresponds to 318–446 (YDSFKEQFAK…SFVRSRMFEY (129 aa)). EF-hand domains follow at residues 335 to 370 (IRKN…LNKY) and 376 to 411 (TSRE…IAIK). The helical transmembrane segment at 447 to 467 (IIVFVLLINLVAVIIETTLDI) threads the bilayer. The Extracellular segment spans residues 468 to 480 (ENSSSQETWQEVE). N-linked (GlcNAc...) asparagine glycosylation is present at Asn-469. A helical transmembrane segment spans residues 481 to 501 (FFLGWIYVAEMALKIFSLGFG). Topologically, residues 502–510 (AYWMEGQNK) are cytoplasmic. Residues 511–531 (FDFVLTWTIFIGETLTFAFPS) traverse the membrane as a helical segment. The Extracellular segment spans residues 532–540 (KLPFLSNGE). Residues 541–558 (WIRYLLLGRVLRLTRILL) form a helical; Voltage-sensor membrane-spanning segment. Topologically, residues 559 to 582 (QVQRFRAFVATFFTLMSSLMPYLG) are cytoplasmic. The chain crosses the membrane as a helical span at residues 583–603 (IVFCVLCMYCSIGLQIFGGIV). The Extracellular portion of the chain corresponds to 604-627 (YAGNPTLEETDLFNNDYLLFNFND). Residues 628–642 (YPSGMVTLFNLLVMG) constitute an intramembrane region (pore-forming). The Extracellular portion of the chain corresponds to 643–663 (NWQVWMESYWQLTGTSWSLIY). The helical transmembrane segment at 664–684 (FVSFYLISILLLLNLIVAFVL) threads the bilayer. The Cytoplasmic portion of the chain corresponds to 685-742 (EAFFAEMELEKGEEVDIQNPTSGGIKKRRSMRVRSKGTMVDILLHHMLSNELDGSQNS).

This sequence belongs to the calcium channel alpha-1 subunit (TC 1.A.1.11) family. Two pore calcium channel subfamily. In terms of assembly, homodimer.

It localises to the membrane. Inhibited by Al(3+). Functions as a voltage-gated inward-rectifying Ca(2+) channel (VDCC) across the plasma membrane that mediates sucrose-induced Ca(2+) influx in autotrophically grown leaf cells. Acts as the major ROS-responsive Ca(2+) channel and is the possible target of Al-dependent inhibition. Plays a regulatory role in defense responses. This is Two pore calcium channel protein 1 (TPC1) from Triticum aestivum (Wheat).